The sequence spans 91 residues: Acylphosphatase (91 aa).

Residues 4–91 (RAIVTIKGLV…GEFDDFDVRY (88 aa)) form the Acylphosphatase-like domain. Residues arginine 19 and asparagine 37 contribute to the active site.

The protein belongs to the acylphosphatase family.

It catalyses the reaction an acyl phosphate + H2O = a carboxylate + phosphate + H(+). This chain is Acylphosphatase (acyP), found in Geobacter sulfurreducens (strain ATCC 51573 / DSM 12127 / PCA).